The primary structure comprises 576 residues: Alpha-1,3-arabinosyltransferase XAT3 (576 aa).

At 1 to 19 the chain is on the cytoplasmic side; it reads MKAGERPKLVRGVRQESRR. A helical; Signal-anchor for type II membrane protein transmembrane segment spans residues 20-40; the sequence is FRLLVIVVGFFLVSLTFVFVS. Residues 41–576 lie on the Lumenal side of the membrane; the sequence is KPDAILFSLN…LLEALDNLNP (536 aa). Positions 64–171 are disordered; that stretch reads IQQKVNEPSG…KHKVTLPTVS (108 aa). Composition is skewed to basic and acidic residues over residues 73–98, 126–138, and 147–163; these read GESR…DAKP, THNK…KSHQ, and GESK…EQKH. N-linked (GlcNAc...) asparagine glycosylation is found at asparagine 172, asparagine 375, and asparagine 443.

It belongs to the glycosyltransferase 61 family.

The protein localises to the golgi apparatus membrane. It functions in the pathway glycan metabolism. Glycosyltransferase involved in the arabinosylation of xylan, the major hemicellulose (non-cellulosic component) of primary and secondary walls of angiosperms. Possesses alpha-1,3-arabinosyltransferase activity, transferring an arabinofuranose residue to the xylan backbone. The chain is Alpha-1,3-arabinosyltransferase XAT3 from Oryza sativa subsp. japonica (Rice).